A 485-amino-acid chain; its full sequence is Glutamyl-tRNA(Gln) amidotransferase subunit A (485 aa).

Active-site charge relay system residues include Lys-75 and Ser-150. Ser-174 acts as the Acyl-ester intermediate in catalysis.

Belongs to the amidase family. GatA subfamily. Heterotrimer of A, B and C subunits.

The catalysed reaction is L-glutamyl-tRNA(Gln) + L-glutamine + ATP + H2O = L-glutaminyl-tRNA(Gln) + L-glutamate + ADP + phosphate + H(+). Allows the formation of correctly charged Gln-tRNA(Gln) through the transamidation of misacylated Glu-tRNA(Gln) in organisms which lack glutaminyl-tRNA synthetase. The reaction takes place in the presence of glutamine and ATP through an activated gamma-phospho-Glu-tRNA(Gln). This chain is Glutamyl-tRNA(Gln) amidotransferase subunit A, found in Trichodesmium erythraeum (strain IMS101).